A 514-amino-acid chain; its full sequence is ATP synthase subunit alpha (514 aa).

170-177 (GDRQIGKT) serves as a coordination point for ATP.

Belongs to the ATPase alpha/beta chains family. F-type ATPases have 2 components, CF(1) - the catalytic core - and CF(0) - the membrane proton channel. CF(1) has five subunits: alpha(3), beta(3), gamma(1), delta(1), epsilon(1). CF(0) has three main subunits: a(1), b(2) and c(9-12). The alpha and beta chains form an alternating ring which encloses part of the gamma chain. CF(1) is attached to CF(0) by a central stalk formed by the gamma and epsilon chains, while a peripheral stalk is formed by the delta and b chains.

Its subcellular location is the cell inner membrane. The catalysed reaction is ATP + H2O + 4 H(+)(in) = ADP + phosphate + 5 H(+)(out). Produces ATP from ADP in the presence of a proton gradient across the membrane. The alpha chain is a regulatory subunit. This is ATP synthase subunit alpha from Pseudomonas savastanoi pv. phaseolicola (strain 1448A / Race 6) (Pseudomonas syringae pv. phaseolicola (strain 1448A / Race 6)).